The primary structure comprises 209 residues: Uridine kinase (209 aa).

12–19 (GGSGSGKT) contacts ATP.

It belongs to the uridine kinase family.

Its subcellular location is the cytoplasm. The enzyme catalyses uridine + ATP = UMP + ADP + H(+). It carries out the reaction cytidine + ATP = CMP + ADP + H(+). The protein operates within pyrimidine metabolism; CTP biosynthesis via salvage pathway; CTP from cytidine: step 1/3. It participates in pyrimidine metabolism; UMP biosynthesis via salvage pathway; UMP from uridine: step 1/1. The sequence is that of Uridine kinase from Streptococcus mutans serotype c (strain ATCC 700610 / UA159).